The chain runs to 525 residues: MRGSPRNLCRVQGMIEEIVNRLRGKLIVSCQPVPESPFDNVASVVAYARAAEASGASGLRIEGAANVAATAQASTLPVIGLIKRDLDDSPVRITPFLEDVAALCDAGAAIVAVDATDRRRPVPAAELIGEIKRRGRIAMADISTLAEARNALAAGADIIGTTMSGYTGEGPTPKDPDLDLVAHCSRLGSFLIAEGRYNSPQQAGEAIRAGADAVVVGSAITRPEHITGWFRDAVESAAKPSSPVLAFDIGGTKTLAALVRGREILERRVMTTPASVGSESWIGAIASLSADWQGRYQRAAIAVTGRVDGEIWSSLNPETLAIPPDYPLGRRMGAALGAPVEVINDAQAAAWGENRFGAARGRDMVFLTISSGIGGGIVLGGRLIRGARGIAGSLGQVLVAGPSGFVRLETLASGFGIAKMALEAGHAGDARSVFSAAAAGEGWARRILLDAASQLAAAVAGLQAIVDPECIVIGGGVGMADGFLDMLREALGSHSAVMRPDIVAAELGADAGIIGVADLAATYFS.

Positions methionine 1–serine 241 are manNAc-6-P epimerase. A manNAc kinase region spans residues serine 242–serine 525. Residues alanine 246–lysine 253 and glycine 372–leucine 379 each bind ATP.

The protein in the N-terminal section; belongs to the NanE family. It in the C-terminal section; belongs to the ROK (NagC/XylR) family. NanK subfamily.

It carries out the reaction an N-acyl-D-glucosamine 6-phosphate = an N-acyl-D-mannosamine 6-phosphate. It catalyses the reaction an N-acyl-D-mannosamine + ATP = an N-acyl-D-mannosamine 6-phosphate + ADP + H(+). Its pathway is amino-sugar metabolism; N-acetylneuraminate degradation; D-fructose 6-phosphate from N-acetylneuraminate: step 2/5. It functions in the pathway amino-sugar metabolism; N-acetylneuraminate degradation; D-fructose 6-phosphate from N-acetylneuraminate: step 3/5. In terms of biological role, converts N-acetylmannosamine-6-phosphate (ManNAc-6-P) to N-acetylglucosamine-6-phosphate (GlcNAc-6-P). Catalyzes the phosphorylation of N-acetylmannosamine (ManNAc) to ManNAc-6-P. The polypeptide is Bifunctional enzyme NanE/NanK (nanEK) (Brucella suis biovar 1 (strain 1330)).